We begin with the raw amino-acid sequence, 1370 residues long: MRDKKGPVNKRVDFLSNKLNKYSIRKFTVGTASILIGSLMYLGTQQEAEAAENNIENPTTLKDNVQSKEVKIEEVTNKDTAPQGVEAKSEVTSNKDTIEHEASVKAEDISKKEDTPKEVANVAEVQPKSSVTHNAEAPKVRKARSVDEGSFDITRDSKNVVESTPITIQGKEHFEGYGSVDIQKNPTDLGVSEVTRFNVGNESNGLIGALQLKNKIDFSKDFNFKVRVANNHQSNTTGADGWGFLFSKGNAEEYLTNGGILGDKGLVNSGGFKIDTGYIYTSSMDKTEKQAGQGYRGYGAFVKNDSSGNSQMVGENIDKSKTNFLNYADNSTNTSDGKFHGQRLNDVILTYVASTGKMRAEYAGKTWETSITDLGLSKNQAYNFLITSSQRWGLNQGINANGWMRTDLKGSEFTFTPSAKNNNRIRKKVEEIPFKKERKFNPDLAPGTEKVTREGQKGEKTITTPTLKNPLTGEIISKGESKEEITKDPINELTEYGPETIAPGHRDEFDPKLPTGEKEEVPGKPGIKNPETGDVVRPPVDSVTKYGPVKGDSIVEKEEIPFEKERKFNPDLAPGTEKVTREGQKGEKTITTPTLKNPLTGEIISKGESKEEITKDPINELTEYGPETIAPGHRDEFDPKLPTGEKEEVPGKPGIKNPETGDVVRPPVDSVTKYGPVKGDSIVEKEEIPFEKERKFNPDLAPGTEKVTREGQKGEKTITTPTLKNPLTGEIISKGESKEEITKDPINELTEYGPETIAPGHRDEFDPKLPTGEKEEVPGKPGIKNPETGDVVRPPVDSVTKYGPVKGDSIVEKEEIPFEKERKFNPDLAPGTEKVTREGQKGEKTITTPTLKNPLTGEIISKGESKEEITKDPINELTEYGPETIAPGHRDEFDPKLPTGEKEEVPGKPGIKNPETGDVVRPPVDSVTKYGPVKGDSIVEKEEIPFKKERKFNPDLAPGTEKVTREGQKGEKTITTPTLKNPLTGEIISKGESKEEITKDPINELTEYGPETITPGHRDEFDPKLPTGEKEEVPGKPGIKNPETGDVVRPPVDSVTKYGPVKGDSIVEKEEIPFEKERKFNPDLAPGTEKVTREGQKGEKTITTPTLKNPLTGEIISKGESKEEITKDPVNELTEFGGEKIPQGHKDIFDPNLPTDQTEKVPGKPGIKNPDTGKVIEEPVDDVIKHGPKTGTPETKTVEIPFETKREFNPKLQPGEERVKQEGQPGSKTITTPITVNPLTGEKVGEGQPTEEITKQPVDKIVEFGGEKPKDPKGPENPEKPSRPTHPSGPVNPNNPGLSKDRAKPNGPVHSMDKNDKVKKSKIAKESVANQEKKRAELPKTGLESTQKGLIFSSIIGIAGLMLLARRRKN.

The signal sequence occupies residues 1-50 (MRDKKGPVNKRVDFLSNKLNKYSIRKFTVGTASILIGSLMYLGTQQEAEA). 3 disordered regions span residues 77–116 (NKDTAPQGVEAKSEVTSNKDTIEHEASVKAEDISKKEDTP), 439–472 (KFNPDLAPGTEKVTREGQKGEKTITTPTLKNPLT), and 495–1344 (EYGP…TGLE). Composition is skewed to basic and acidic residues over residues 96 to 116 (DTIEHEASVKAEDISKKEDTP), 450 to 460 (KVTREGQKGEK), 504 to 522 (GHRDEFDPKLPTGEKEEVP), 553 to 569 (SIVEKEEIPFEKERKFN), 578 to 588 (KVTREGQKGEK), 605 to 618 (SKGESKEEITKDPI), 632 to 650 (GHRDEFDPKLPTGEKEEVP), 681 to 697 (SIVEKEEIPFEKERKFN), 706 to 716 (KVTREGQKGEK), 733 to 746 (SKGESKEEITKDPI), 760 to 778 (GHRDEFDPKLPTGEKEEVP), 809 to 825 (SIVEKEEIPFEKERKFN), 834 to 844 (KVTREGQKGEK), 861 to 874 (SKGESKEEITKDPI), 888 to 906 (GHRDEFDPKLPTGEKEEVP), 937 to 953 (SIVEKEEIPFKKERKFN), 962 to 972 (KVTREGQKGEK), 989 to 1002 (SKGESKEEITKDPI), 1016 to 1034 (GHRDEFDPKLPTGEKEEVP), 1065 to 1081 (SIVEKEEIPFEKERKFN), 1090 to 1100 (KVTREGQKGEK), 1117 to 1130 (SKGESKEEITKDPV), 1174 to 1185 (KVIEEPVDDVIK), and 1202 to 1221 (FETKREFNPKLQPGEERVKQ). Residues 418–500 (SAKNNNRIRK…NELTEYGPET (83 aa)) form the G5 1 domain. One can recognise a G5 2 domain in the interval 546–628 (YGPVKGDSIV…NELTEYGPET (83 aa)). Residues 674–756 (YGPVKGDSIV…NELTEYGPET (83 aa)) form the G5 3 domain. One can recognise a G5 4 domain in the interval 802 to 884 (YGPVKGDSIV…NELTEYGPET (83 aa)). The G5 5 domain maps to 930–1012 (YGPVKGDSIV…NELTEYGPET (83 aa)). The G5 6 domain occupies 1058–1140 (YGPVKGDSIV…NELTEFGGEK (83 aa)). A G5 7 domain is found at 1186–1268 (HGPKTGTPET…DKIVEFGGEK (83 aa)). The span at 1224–1238 (QPGSKTITTPITVNP) shows a compositional bias: polar residues. Positions 1252–1282 (EITKQPVDKIVEFGGEKPKDPKGPENPEKPS) are enriched in basic and acidic residues. Residues 1338-1342 (LPKTG) carry the LPXTG sorting signal motif. A Pentaglycyl murein peptidoglycan amidated threonine modification is found at threonine 1341. Positions 1342-1370 (GLESTQKGLIFSSIIGIAGLMLLARRRKN) are cleaved as a propeptide — removed by sortase.

Its subcellular location is the secreted. It localises to the cell wall. The chain is Putative surface protein SA2285 from Staphylococcus aureus (strain N315).